The sequence spans 89 residues: Small ribosomal subunit protein uS15 (89 aa).

The protein belongs to the universal ribosomal protein uS15 family. As to quaternary structure, part of the 30S ribosomal subunit. Forms a bridge to the 50S subunit in the 70S ribosome, contacting the 23S rRNA.

In terms of biological role, one of the primary rRNA binding proteins, it binds directly to 16S rRNA where it helps nucleate assembly of the platform of the 30S subunit by binding and bridging several RNA helices of the 16S rRNA. Its function is as follows. Forms an intersubunit bridge (bridge B4) with the 23S rRNA of the 50S subunit in the ribosome. The sequence is that of Small ribosomal subunit protein uS15 from Oenococcus oeni (strain ATCC BAA-331 / PSU-1).